Here is a 384-residue protein sequence, read N- to C-terminus: MNYNAKRVMRQNSVCVGSNDMAASPIMIGPAPPSAPSTPQLQTTEDIKPLLVQRQVILLQSGSIPTNPSPQQINLAGHNVAGGASGSNVANVLIPDDAPVSLLTEIADIMRSFGDSDQPRTGSVKLVEQILQQQLRGIFNEASLVAMRRKQNPCPSQADFEFLMRNHPVKIARMRKHLKDMRILKRFLSIRTGRPQDFMDDLEQQEEDEELAIDVYELHDEDRMRRLFRADRISQILTGQQYLEFNEARKTSFYCRHGEKIKNKFRRFLDLPADLRIPTPTMNILAYLAHETIAAIVDYSILTRLNSDNRATEPYSRVTSAGGSPAMMHVCPEVTQGRGMEVVKPISVPEIHEAMRRFRQMSSRKIGRYRNSCDIDFRRSFLAI.

The protein belongs to the SPT3 family. Component of the Spt-Ada-Gcn5 acetyltransferase (SAGA) complex consisting of wda/Taf5L, Saf6, Taf9, Taf10b, Taf12, Ada1, Spt3, Spt7, Spt20, Sf3b3, Sf3b5, Nipped-A/Tra1, a histone acetyltransferase (HAT) module made up of Gcn5, Ada2b (Isoform B), Ada3 and Sgf29, and a deubiquitinase (DUB) module made up of not/nonstop, Sgf11 and e(y)2 tethered to SAGA by Atxn7. Taf5 and Taf10, which has partially redundant properties with Taf10b, may also be part of this complex.

The protein resides in the nucleus. It is found in the chromosome. Component of the transcription regulatory complex SAGA, a multiprotein complex that activates transcription by remodeling chromatin and mediating histone acetylation and deubiquitination. The SAGA complex predominantly acetylates histone H3. Required for oogenesis; involved in transcriptional activation. The chain is SAGA complex subunit Spt3 from Drosophila melanogaster (Fruit fly).